Consider the following 219-residue polypeptide: uncharacterized protein (219 aa).

Composition is skewed to basic and acidic residues over residues 1–20 (METPIEREIRRSCEREESLR), 30–39 (AGRELVELRV), and 156–170 (QEVRAVREREQELQR). Residues 1 to 195 (METPIEREIR…PSLTASRGDG (195 aa)) are disordered.

Belongs to the MISP family.

This is an uncharacterized protein from Homo sapiens (Human).